We begin with the raw amino-acid sequence, 307 residues long: Taste receptor type 2 member 41 (307 aa).

At 1 to 7 the chain is on the extracellular side; that stretch reads MQAALTA. Residues 8–28 form a helical membrane-spanning segment; it reads FFMLLFSLLSLLGIAANGFIV. The Cytoplasmic portion of the chain corresponds to 29–40; sequence LVLGREWLRYGR. A helical transmembrane segment spans residues 41–61; sequence LLPLDMILISLGASRFCLQLV. Residues 62 to 88 are Extracellular-facing; sequence GTVHNFYYSAQKVEYSGGLGRQFFHLH. The chain crosses the membrane as a helical span at residues 89–109; it reads WHFLNSATFWFCSWLSVLFCV. The Cytoplasmic segment spans residues 110 to 129; the sequence is KIANITHPTFLWLKWRFPAW. The helical transmembrane segment at 130–150 threads the bilayer; it reads VPWLLLGSVLISFIITLLFFW. The Extracellular portion of the chain corresponds to 151-183; it reads VNYPAYQEFLIRKFSVNMTYKWNTRIETYYFPS. A glycan (N-linked (GlcNAc...) asparagine) is linked at asparagine 167. The chain crosses the membrane as a helical span at residues 184–204; that stretch reads LKLVIWSIPFSVFLVSIMLLI. The Cytoplasmic segment spans residues 205 to 234; that stretch reads NSLRRHTQRMQHNGHSLQDPSTQAHTRALK. A helical membrane pass occupies residues 235-255; sequence SLISFLILYALSFLSLIIDAT. Over 256-264 the chain is Extracellular; that stretch reads KFISMQNDF. The helical transmembrane segment at 265–285 threads the bilayer; sequence YWPWQIAVYLCISIHPFILIF. Residues 286–307 are Cytoplasmic-facing; the sequence is SNLKLRSVFSQLLLLARGFWVA.

The protein belongs to the G-protein coupled receptor T2R family.

The protein resides in the membrane. Receptor that may play a role in the perception of bitterness and is gustducin-linked. May play a role in sensing the chemical composition of the gastrointestinal content. The activity of this receptor may stimulate alpha gustducin, mediate PLC-beta-2 activation and lead to the gating of TRPM5. In Pan paniscus (Pygmy chimpanzee), this protein is Taste receptor type 2 member 41 (TAS2R41).